Reading from the N-terminus, the 229-residue chain is 1-Cys peroxiredoxin PER1 (229 aa).

Residues Leu-4–Thr-173 enclose the Thioredoxin domain. Cys-46 functions as the Cysteine sulfenic acid (-SOH) intermediate in the catalytic mechanism. Residues Arg-205 to Lys-228 carry the Bipartite nuclear localization signal motif.

Belongs to the peroxiredoxin family. Prx6 subfamily.

It localises to the nucleus. Its subcellular location is the cytoplasm. It carries out the reaction a hydroperoxide + [thioredoxin]-dithiol = an alcohol + [thioredoxin]-disulfide + H2O. In terms of biological role, thiol-specific peroxidase that catalyzes the reduction of hydrogen peroxide and organic hydroperoxides to water and alcohols, respectively. Seems to contribute to the inhibition of germination during stress. This is 1-Cys peroxiredoxin PER1 (PER1) from Zea mays (Maize).